Here is a 230-residue protein sequence, read N- to C-terminus: Ribose-5-phosphate isomerase A (230 aa).

Residues 28-31, 83-86, and 97-100 each bind substrate; these read TGST, DGAD, and KGLG. Glutamate 106 serves as the catalytic Proton acceptor. Lysine 124 serves as a coordination point for substrate.

The protein belongs to the ribose 5-phosphate isomerase family. As to quaternary structure, homodimer.

The enzyme catalyses aldehydo-D-ribose 5-phosphate = D-ribulose 5-phosphate. It functions in the pathway carbohydrate degradation; pentose phosphate pathway; D-ribose 5-phosphate from D-ribulose 5-phosphate (non-oxidative stage): step 1/1. Catalyzes the reversible conversion of ribose-5-phosphate to ribulose 5-phosphate. This is Ribose-5-phosphate isomerase A from Gloeobacter violaceus (strain ATCC 29082 / PCC 7421).